The sequence spans 146 residues: Kappa-casein (146 aa).

2 O-linked (GalNAc...) threonine glycosylation sites follow: Thr107 and Thr112. A Phosphoserine; alternate modification is found at Ser125. O-linked (GalNAc...) serine; alternate glycosylation is present at Ser125. Thr142 carries an O-linked (GalNAc...) threonine glycan. Ser143 carries the post-translational modification Phosphoserine.

Belongs to the kappa-casein family. Mammary gland specific. Secreted in milk.

It is found in the secreted. Kappa-casein stabilizes micelle formation, preventing casein precipitation in milk. The protein is Kappa-casein (CSN3) of Tapirus indicus (Asiatic tapir).